A 116-amino-acid chain; its full sequence is Ribosome-binding factor A (116 aa).

Belongs to the RbfA family. Monomer. Binds 30S ribosomal subunits, but not 50S ribosomal subunits or 70S ribosomes.

It is found in the cytoplasm. Functionally, one of several proteins that assist in the late maturation steps of the functional core of the 30S ribosomal subunit. Associates with free 30S ribosomal subunits (but not with 30S subunits that are part of 70S ribosomes or polysomes). Required for efficient processing of 16S rRNA. May interact with the 5'-terminal helix region of 16S rRNA. The sequence is that of Ribosome-binding factor A from Streptococcus pyogenes serotype M28 (strain MGAS6180).